We begin with the raw amino-acid sequence, 461 residues long: Arginine biosynthesis bifunctional protein ArgJ, chloroplastic (461 aa).

Substrate contacts are provided by Thr-202, Lys-228, Thr-239, Glu-326, Asn-456, and Thr-461. The Nucleophile role is filled by Thr-239.

It belongs to the ArgJ family. As to quaternary structure, heterodimer of an alpha and a beta chain.

It is found in the plastid. The protein resides in the chloroplast. The catalysed reaction is N(2)-acetyl-L-ornithine + L-glutamate = N-acetyl-L-glutamate + L-ornithine. The enzyme catalyses L-glutamate + acetyl-CoA = N-acetyl-L-glutamate + CoA + H(+). Its pathway is amino-acid biosynthesis; L-arginine biosynthesis; L-ornithine and N-acetyl-L-glutamate from L-glutamate and N(2)-acetyl-L-ornithine (cyclic): step 1/1. The protein operates within amino-acid biosynthesis; L-arginine biosynthesis; N(2)-acetyl-L-ornithine from L-glutamate: step 1/4. Catalyzes two activities which are involved in the cyclic version of arginine biosynthesis: the synthesis of acetylglutamate from glutamate and acetyl-CoA, and of ornithine by transacetylation between acetylornithine and glutamate. The chain is Arginine biosynthesis bifunctional protein ArgJ, chloroplastic from Ostreococcus lucimarinus (strain CCE9901).